The chain runs to 107 residues: U1-lycotoxin-Ls1e (107 aa).

The N-terminal stretch at M1 to S20 is a signal peptide. A propeptide spanning residues E21–R41 is cleaved from the precursor. Cystine bridges form between C44–C59, C51–C68, C58–C86, and C70–C84.

It belongs to the neurotoxin 19 (CSTX) family. 04 (U1-Lctx) subfamily. As to expression, expressed by the venom gland.

Its subcellular location is the secreted. This chain is U1-lycotoxin-Ls1e, found in Lycosa singoriensis (Wolf spider).